A 568-amino-acid chain; its full sequence is Urease subunit alpha (568 aa).

The Urease domain maps to 130 to 568 (GGIDTHIHFI…LPMAQRYFLF (439 aa)). Ni(2+) contacts are provided by H135, H137, and K218. At K218 the chain carries N6-carboxylysine. H220 provides a ligand contact to substrate. Ni(2+) is bound by residues H247 and H273. H321 serves as the catalytic Proton donor. Position 361 (D361) interacts with Ni(2+).

The protein belongs to the metallo-dependent hydrolases superfamily. Urease alpha subunit family. In terms of assembly, heterotrimer of UreA (gamma), UreB (beta) and UreC (alpha) subunits. Three heterotrimers associate to form the active enzyme. The cofactor is Ni cation. Carboxylation allows a single lysine to coordinate two nickel ions.

It localises to the cytoplasm. It catalyses the reaction urea + 2 H2O + H(+) = hydrogencarbonate + 2 NH4(+). It participates in nitrogen metabolism; urea degradation; CO(2) and NH(3) from urea (urease route): step 1/1. In Burkholderia ambifaria (strain ATCC BAA-244 / DSM 16087 / CCUG 44356 / LMG 19182 / AMMD) (Burkholderia cepacia (strain AMMD)), this protein is Urease subunit alpha.